Reading from the N-terminus, the 120-residue chain is Ribonuclease P protein component 4 (120 aa).

4 residues coordinate Zn(2+): Cys-67, Cys-70, Cys-96, and Cys-99.

Belongs to the eukaryotic/archaeal RNase P protein component 4 family. As to quaternary structure, consists of a catalytic RNA component and at least 4-5 protein subunits. The cofactor is Zn(2+).

Its subcellular location is the cytoplasm. The catalysed reaction is Endonucleolytic cleavage of RNA, removing 5'-extranucleotides from tRNA precursor.. In terms of biological role, part of ribonuclease P, a protein complex that generates mature tRNA molecules by cleaving their 5'-ends. This is Ribonuclease P protein component 4 from Thermococcus sibiricus (strain DSM 12597 / MM 739).